A 179-amino-acid chain; its full sequence is Centromere protein R (179 aa).

The disordered stretch occupies residues methionine 1–threonine 79. Residues asparagine 30–histidine 50 show a composition bias toward polar residues. Residues asparagine 51–glutamate 64 show a composition bias toward basic and acidic residues. The LXXLL motif motif lies at leucine 172 to leucine 176.

It is found in the nucleus. The protein localises to the chromosome. The protein resides in the centromere. It localises to the kinetochore. Its function is as follows. Transcription coregulator that can have both coactivator and corepressor functions. Involved in the coactivation of nuclear receptors for retinoid X (RXRs) and thyroid hormone (TRs) in a ligand-dependent fashion. Probable component of a centromeric complex involved in assembly of kinetochore proteins, mitotic progression and chromosome segregation. The protein is Centromere protein R (CENPR) of Gallus gallus (Chicken).